Here is a 474-residue protein sequence, read N- to C-terminus: Methylenetetrahydrofolate--tRNA-(uracil-5-)-methyltransferase TrmFO (474 aa).

13–18 serves as a coordination point for FAD; it reads GGGLAG.

Belongs to the MnmG family. TrmFO subfamily. It depends on FAD as a cofactor.

It is found in the cytoplasm. It catalyses the reaction uridine(54) in tRNA + (6R)-5,10-methylene-5,6,7,8-tetrahydrofolate + NADH + H(+) = 5-methyluridine(54) in tRNA + (6S)-5,6,7,8-tetrahydrofolate + NAD(+). The catalysed reaction is uridine(54) in tRNA + (6R)-5,10-methylene-5,6,7,8-tetrahydrofolate + NADPH + H(+) = 5-methyluridine(54) in tRNA + (6S)-5,6,7,8-tetrahydrofolate + NADP(+). Its function is as follows. Catalyzes the folate-dependent formation of 5-methyl-uridine at position 54 (M-5-U54) in all tRNAs. This chain is Methylenetetrahydrofolate--tRNA-(uracil-5-)-methyltransferase TrmFO, found in Bartonella tribocorum (strain CIP 105476 / IBS 506).